The sequence spans 509 residues: Maturase K (509 aa).

This sequence belongs to the intron maturase 2 family. MatK subfamily.

It is found in the plastid. The protein localises to the chloroplast. Usually encoded in the trnK tRNA gene intron. Probably assists in splicing its own and other chloroplast group II introns. This Opuntia quimilo (Cactus) protein is Maturase K.